The sequence spans 51 residues: Defensin (51 aa).

Intrachain disulfides connect Cys3-Cys31, Cys17-Cys36, and Cys21-Cys38. Phe51 carries the post-translational modification Phenylalanine amide.

The protein localises to the secreted. Antibacterial peptide against Gram-positive and Gram-negative bacteria and fungi. This Bombus pascuorum (Common carder bumblebee) protein is Defensin.